The sequence spans 413 residues: Serine/threonine transporter SstT (413 aa).

Helical transmembrane passes span 22–42, 61–81, 89–109, 148–168, 189–209, 224–244, 305–325, 337–357, and 363–383; these read GLLL…VLGF, AVAP…KQLG, IVVL…LFSF, ALFN…GIAL, IVHF…AETL, LVVL…ILVF, MAGA…TLGI, VVAS…LLLI, and LFGI…VIGV.

This sequence belongs to the dicarboxylate/amino acid:cation symporter (DAACS) (TC 2.A.23) family.

It localises to the cell inner membrane. It carries out the reaction L-serine(in) + Na(+)(in) = L-serine(out) + Na(+)(out). The catalysed reaction is L-threonine(in) + Na(+)(in) = L-threonine(out) + Na(+)(out). Functionally, involved in the import of serine and threonine into the cell, with the concomitant import of sodium (symport system). The polypeptide is Serine/threonine transporter SstT (Histophilus somni (strain 129Pt) (Haemophilus somnus)).